Here is a 276-residue protein sequence, read N- to C-terminus: uncharacterized protein (276 aa).

The signal sequence occupies residues 1–16; the sequence is MELGLILMFASAFVSA. The N-linked (GlcNAc...) asparagine glycan is linked to Asn265.

This is an uncharacterized protein from Encephalitozoon cuniculi (strain GB-M1) (Microsporidian parasite).